The following is a 177-amino-acid chain: Large ribosomal subunit protein uL6 (177 aa).

This sequence belongs to the universal ribosomal protein uL6 family. As to quaternary structure, part of the 50S ribosomal subunit.

This protein binds to the 23S rRNA, and is important in its secondary structure. It is located near the subunit interface in the base of the L7/L12 stalk, and near the tRNA binding site of the peptidyltransferase center. In Psychromonas ingrahamii (strain DSM 17664 / CCUG 51855 / 37), this protein is Large ribosomal subunit protein uL6.